The primary structure comprises 608 residues: Cytoplasmic dynein 1 intermediate chain 1 (608 aa).

Composition is skewed to basic and acidic residues over residues 1–13 and 20–60; these read MSDKSDLKAELER and QIRE…RETE. Residues 1–106 are disordered; the sequence is MSDKSDLKAE…SGDLGPLTRR (106 aa). Residue S2 is modified to N-acetylserine. S50 is modified (phosphoserine). Residues 70–79 are compositionally biased toward pro residues; it reads PEPPLVPTPM. Residues 80–90 show a composition bias toward low complexity; the sequence is SPSSKSVSTPS. S83 carries the post-translational modification Phosphoserine. T88 is subject to Phosphothreonine. S90, S94, and S97 each carry phosphoserine. The tract at residues 110-126 is interaction with DYNLT1; the sequence is KLGVSKITQVDFLPREV. Positions 132 to 184 are disordered; that stretch reads ETQTPLATHQSEEDEDDEEMVEPKGDQDSEQENEDKKQEVKEAPPRELTEEEK. T139 carries the post-translational modification Phosphothreonine. Phosphoserine is present on residues S142 and S160. The segment covering 165–184 has biased composition (basic and acidic residues); sequence EDKKQEVKEAPPRELTEEEK. 7 WD repeats span residues 248 to 297, 301 to 341, 350 to 391, 400 to 440, 445 to 490, 493 to 533, and 539 to 578; these read SKHR…TTPE, HCQS…RTPV, AHTH…TPQE, SKPV…AGIG, GHQG…PLYS, DNAD…EVPT, and EGASALNRVRWAQGGKEVAVGDSEGRIWIYDVGELAVPHN. Position 598 is a phosphoserine (S598).

The protein belongs to the dynein intermediate chain family. As to quaternary structure, homodimer. The cytoplasmic dynein 1 complex consists of two catalytic heavy chains (HCs) and a number of non-catalytic subunits presented by intermediate chains (ICs), light intermediate chains (LICs) and light chains (LCs); the composition seems to vary in respect to the IC, LIC and LC composition. The heavy chain homodimer serves as a scaffold for the probable homodimeric assembly of the respective non-catalytic subunits. The ICs and LICs bind directly to the HC dimer and the LCs assemble on the IC dimer. Interacts with DYNC1H1. Interacts with DYNLT1 and DYNLT3. Interacts with DCTN1. Interacts with MCRS1; the interaction is required for the proper distribution of centriolar satellites.

The protein resides in the cytoplasm. It is found in the chromosome. The protein localises to the centromere. It localises to the kinetochore. Its subcellular location is the cytoskeleton. The protein resides in the spindle pole. Its function is as follows. Acts as one of several non-catalytic accessory components of the cytoplasmic dynein 1 complex that are thought to be involved in linking dynein to cargos and to adapter proteins that regulate dynein function. Cytoplasmic dynein 1 acts as a motor for the intracellular retrograde motility of vesicles and organelles along microtubules. The intermediate chains mediate the binding of dynein to dynactin via its 150 kDa component (p150-glued) DCTN1. May play a role in mediating the interaction of cytoplasmic dynein with membranous organelles and kinetochores. This is Cytoplasmic dynein 1 intermediate chain 1 (DYNC1I1) from Bos taurus (Bovine).